Consider the following 268-residue polypeptide: Bis(5'-nucleosyl)-tetraphosphatase, symmetrical (268 aa).

This sequence belongs to the Ap4A hydrolase family.

The enzyme catalyses P(1),P(4)-bis(5'-adenosyl) tetraphosphate + H2O = 2 ADP + 2 H(+). Its function is as follows. Hydrolyzes diadenosine 5',5'''-P1,P4-tetraphosphate to yield ADP. The sequence is that of Bis(5'-nucleosyl)-tetraphosphatase, symmetrical from Nitrosomonas europaea (strain ATCC 19718 / CIP 103999 / KCTC 2705 / NBRC 14298).